The primary structure comprises 317 residues: tRNA dimethylallyltransferase (317 aa).

Residue 14 to 21 (GPTAVGKT) coordinates ATP. 16–21 (TAVGKT) serves as a coordination point for substrate. An interaction with substrate tRNA region spans residues 39–42 (DSMQ).

The protein belongs to the IPP transferase family. As to quaternary structure, monomer. The cofactor is Mg(2+).

The catalysed reaction is adenosine(37) in tRNA + dimethylallyl diphosphate = N(6)-dimethylallyladenosine(37) in tRNA + diphosphate. In terms of biological role, catalyzes the transfer of a dimethylallyl group onto the adenine at position 37 in tRNAs that read codons beginning with uridine, leading to the formation of N6-(dimethylallyl)adenosine (i(6)A). The chain is tRNA dimethylallyltransferase from Bacillus cereus (strain Q1).